A 37-amino-acid chain; its full sequence is Large ribosomal subunit protein bL36 (37 aa).

Belongs to the bacterial ribosomal protein bL36 family.

In Clostridium kluyveri (strain NBRC 12016), this protein is Large ribosomal subunit protein bL36.